We begin with the raw amino-acid sequence, 388 residues long: Flavin-dependent monooxygenase (388 aa).

R54 lines the NADPH pocket. D61, R117, and D311 together coordinate FAD.

The protein belongs to the aromatic-ring hydroxylase family. TetX subfamily. In terms of assembly, monomer. Requires FAD as cofactor.

It localises to the cytoplasm. The catalysed reaction is a tetracycline + NADPH + O2 + H(+) = an 11a-hydroxytetracycline + NADP(+) + H2O. It carries out the reaction tetracycline + NADPH + O2 + H(+) = 11a-hydroxytetracycline + NADP(+) + H2O. It catalyses the reaction oxytetracycline + NADPH + O2 + H(+) = 11a-hydroxy-oxytetracycline + NADP(+) + H2O. Its function is as follows. An FAD-requiring monooxygenase active on some tetracycline antibiotic derivatives, which leads to their inactivation. Hydroxylates carbon 11a of tetracycline and some analogs. Confers resistance to tetracycline via an oxidoreductase activity; NADPH is more active than NAD. Expression in E.coli leads to breakdown of tetracycline. Confers resistance to doxycycline, chlortetracycline, oxytetracycline and minocycline. The chain is Flavin-dependent monooxygenase from Bacteroides fragilis.